A 346-amino-acid chain; its full sequence is dTDP-glucose 4,6-dehydratase (346 aa).

Residues 17 to 18 (FI), 38 to 41 (DKLT), 64 to 65 (DI), 86 to 90 (LAAES), and Thr105 each bind NAD(+). Ser90 lines the substrate pocket. Thr139 is a substrate binding site. Asp140 (proton donor) is an active-site residue. Catalysis depends on proton acceptor residues Glu141 and Tyr165. Position 165–169 (165–169 (YSASK)) interacts with NAD(+). Asn194 serves as a coordination point for substrate. Asn195 is a binding site for NAD(+). Substrate-binding positions include 204-205 (KL), 220-222 (PVY), Arg229, Asn264, and 298-302 (DRPGH).

This sequence belongs to the NAD(P)-dependent epimerase/dehydratase family. dTDP-glucose dehydratase subfamily. In terms of assembly, homodimer. NAD(+) is required as a cofactor.

It catalyses the reaction dTDP-alpha-D-glucose = dTDP-4-dehydro-6-deoxy-alpha-D-glucose + H2O. The protein operates within carbohydrate biosynthesis; dTDP-L-rhamnose biosynthesis. It participates in bacterial outer membrane biogenesis; LPS O-antigen biosynthesis. Functionally, catalyzes the dehydration of dTDP-D-glucose to form dTDP-6-deoxy-D-xylo-4-hexulose via a three-step process involving oxidation, dehydration and reduction. This is dTDP-glucose 4,6-dehydratase from Neisseria gonorrhoeae.